The primary structure comprises 771 residues: Probable exo-1,4-beta-xylosidase bxlB (771 aa).

Residues 1-25 (MVGLTPQHYGNAIALMTYLASTALA) form the signal peptide. The N-linked (GlcNAc...) asparagine glycan is linked to N67. The active site involves D293. N305, N345, N423, N462, and N463 each carry an N-linked (GlcNAc...) asparagine glycan.

Belongs to the glycosyl hydrolase 3 family.

Its subcellular location is the secreted. The enzyme catalyses Hydrolysis of (1-&gt;4)-beta-D-xylans, to remove successive D-xylose residues from the non-reducing termini.. The protein operates within glycan degradation; xylan degradation. Its function is as follows. Xylan 1,4-beta-xylosidase involved in the hydrolysis of xylan, a major structural heterogeneous polysaccharide found in plant biomass representing the second most abundant polysaccharide in the biosphere, after cellulose. This is Probable exo-1,4-beta-xylosidase bxlB (bxlB) from Aspergillus clavatus (strain ATCC 1007 / CBS 513.65 / DSM 816 / NCTC 3887 / NRRL 1 / QM 1276 / 107).